Reading from the N-terminus, the 858-residue chain is MARRWSTKESQRRGSAWLLLFLAGVYGNGALAELSENVHISGVSTACGESPEQIRAPSGIITSPGWPSDYPAQVNCSWLIRANPGEIITISFQDFDIQGSRRCTLDWLTIETYKNIESYRACGSTIPPPYISSQDHVWIRFHSDDSVSRKGFRLAYFSGKSEQPDCACDQFRCGNGKCIPEAWKCNSMDECGDSSDEEVCASDAHPPTTTAFQPCAYNQFQCLSRFTKVYTCLPESLKCDGNIDCLDLGDEIDCDMPTCGQWLKYFYGTFNSPNYPDFYPPGSNCTWLIDTGDHRKVILRFTDFKLDGTGYGDYVKIYDGLEENPRKLLRVLTAFDSHAPLTVVSSSGQIRVHFCADKVNAARGFNATYQVDGFCLPWEIPCGGNWGCYTEQQRCDGYWHCPNGRDEINCTMCQKEEFPCSRNGVCYPRSDRCNYQNHCPNGSDEKNCFFCQPGNFHCKNNRCVFESWVCDSQDDCGDGSDEENCPVIVPTRVITAAVIGSLICGLLLVIALGCTCKLYSLRMFERRSFETQLSRVEAELLRREAPPSYGQLIAQGLIPPVEDFPVCSPNQASVLENLRLAVRSQLGFTSIRLPMTGRSSNIWNRIFNFARSRHSGSLALVSGDGDEVVPSQSSSRETERSRPHRSLFSVESDDTDTENERRDTAGASGGVAAPLPQKVPPTTAVEATVGSGGNSSAQSTRGGHADGREVSSVEAPSVSPARHQLTSALSRMTQGLRWVRFTLGRSSSTTQNRSPLRQLDTAVSGREDDDDVEMLIPVSDGASDIDANDCSRPLLDLASDQVQGFRQPHSAGNPGVRTSNRDGPCERCGIVHTAQIPDTCLEATVKTETSDDEALLLC.

Residues 1–32 form the signal peptide; sequence MARRWSTKESQRRGSAWLLLFLAGVYGNGALA. The Extracellular portion of the chain corresponds to 33–492; that stretch reads ELSENVHISG…ENCPVIVPTR (460 aa). Disulfide bonds link cysteine 47–cysteine 76, cysteine 103–cysteine 122, cysteine 166–cysteine 178, cysteine 173–cysteine 191, cysteine 185–cysteine 200, cysteine 215–cysteine 232, cysteine 222–cysteine 245, cysteine 239–cysteine 254, and cysteine 259–cysteine 285. In terms of domain architecture, CUB 1 spans 47–159; the sequence is CGESPEQIRA…KGFRLAYFSG (113 aa). N-linked (GlcNAc...) asparagine glycosylation occurs at asparagine 75. LDL-receptor class A domains follow at residues 165 to 201 and 214 to 255; these read DCAC…EVCA and PCAY…IDCD. The CUB 2 domain occupies 259 to 372; that stretch reads CGQWLKYFYG…RGFNATYQVD (114 aa). Asparagine 284 and asparagine 366 each carry an N-linked (GlcNAc...) asparagine glycan. LDL-receptor class A domains lie at 374 to 411, 412 to 449, and 450 to 486; these read FCLP…INCT, MCQK…KNCF, and FCQP…ENCP. Cystine bridges form between cysteine 375/cysteine 388, cysteine 382/cysteine 401, cysteine 395/cysteine 410, cysteine 413/cysteine 426, cysteine 420/cysteine 439, cysteine 433/cysteine 448, cysteine 451/cysteine 463, cysteine 458/cysteine 476, and cysteine 470/cysteine 485. N-linked (GlcNAc...) asparagine glycosylation occurs at asparagine 409. Asparagine 441 carries N-linked (GlcNAc...) asparagine glycosylation. A helical membrane pass occupies residues 493–513; the sequence is VITAAVIGSLICGLLLVIALG. The Cytoplasmic portion of the chain corresponds to 514 to 858; the sequence is CTCKLYSLRM…TSDDEALLLC (345 aa). 2 disordered regions span residues 619 to 721 and 746 to 767; these read ALVS…VSPA and SSST…SGRE. Residues 712 to 721 show a composition bias toward low complexity; sequence SVEAPSVSPA. Residues 746–755 are compositionally biased toward polar residues; that stretch reads SSSTTQNRSP.

The protein belongs to the LDLR family. May interact with RACK1, ZFYVE9 and NMRK2.

The protein resides in the membrane. The protein localises to the coated pit. In terms of biological role, probable receptor, which may be involved in the internalization of lipophilic molecules and/or signal transduction. May act as a tumor suppressor. The chain is Low-density lipoprotein receptor-related protein 12 (Lrp12) from Mus musculus (Mouse).